Reading from the N-terminus, the 414-residue chain is Serine/threonine transporter SstT (414 aa).

8 helical membrane passes run 22–42 (GLVL…TIGF), 54–74 (IFVK…VMAA), 89–109 (IIVL…IAGF), 148–168 (AIFK…GLAL), 189–209 (IVHV…AETL), 223–243 (LLAV…PILV), 305–325 (MAGA…TLGL), and 337–357 (IVAA…LLLI).

This sequence belongs to the dicarboxylate/amino acid:cation symporter (DAACS) (TC 2.A.23) family.

It is found in the cell inner membrane. It carries out the reaction L-serine(in) + Na(+)(in) = L-serine(out) + Na(+)(out). The catalysed reaction is L-threonine(in) + Na(+)(in) = L-threonine(out) + Na(+)(out). Its function is as follows. Involved in the import of serine and threonine into the cell, with the concomitant import of sodium (symport system). This is Serine/threonine transporter SstT from Haemophilus influenzae (strain PittGG).